Here is a 500-residue protein sequence, read N- to C-terminus: Cytochrome P450 726A27 (500 aa).

The helical; Signal-anchor for type II membrane protein transmembrane segment at 7 to 27 (IPSYPIIFSFFIFIFMLIKIW) threads the bilayer. A heme-binding site is contributed by Cys440.

Belongs to the cytochrome P450 family. The cofactor is heme. As to expression, expressed in mature seeds.

Its subcellular location is the membrane. The catalysed reaction is (-)-casbene + reduced [NADPH--hemoprotein reductase] + O2 = 4-hydroxycasbene + oxidized [NADPH--hemoprotein reductase] + H2O + H(+). The enzyme catalyses 8-hydroxycasbene + reduced [NADPH--hemoprotein reductase] + O2 = 4,8-dihydroxycasbene + oxidized [NADPH--hemoprotein reductase] + H2O + H(+). It catalyses the reaction 4,8-dihydroxycasbene + reduced [NADPH--hemoprotein reductase] + O2 = 4,5,8-trihydroxycasbene + oxidized [NADPH--hemoprotein reductase] + H2O + H(+). It functions in the pathway secondary metabolite biosynthesis; terpenoid biosynthesis. Involved in the biosynthesis of macrocyclic lathyrane type diterpenoids (also called Euphorbia factors) natural products, including the cyclization route from casbene to jolkinol C, a precursor for ingenol mebutate that is used to treat actinic keratosis, a precancerous skin condition. Catalyzes the hydroxylation of (-)-casbene and 8-hydroxycasbene to produce 4-hydroxycasbene and 4,8-dihydroxycasbene, respectively. The protein is Cytochrome P450 726A27 of Euphorbia lathyris (Caper spurge).